A 664-amino-acid chain; its full sequence is RBBP8 N-terminal-like protein (664 aa).

The span at 125 to 140 (LRGLGDRPKPRAKEGT) shows a compositional bias: basic and acidic residues. Disordered regions lie at residues 125–284 (LRGL…KLSP) and 369–664 (RAGS…WEET). A compositionally biased stretch (pro residues) spans 241–255 (GTPPPLPARSSPPSP). The segment covering 437-454 (ALDKPLDLSEWGRARGQD) has biased composition (basic and acidic residues). The span at 481–496 (SGPLTRSPQALSNGTK) shows a compositional bias: polar residues. The span at 516–528 (LPGSQLSLSSPGS) shows a compositional bias: low complexity. Pro residues predominate over residues 537 to 552 (PLPPPHPQPPPHPQPP). Basic and acidic residues predominate over residues 554–570 (LDGHPEPSKAEVLRPES). A compositionally biased stretch (polar residues) spans 584-597 (GLSSQAEATTSTTG). Positions 628-637 (KKPSRGRRKL) are enriched in basic residues. A compositionally biased stretch (polar residues) spans 654–664 (PSPNSSPWEET).

The sequence is that of RBBP8 N-terminal-like protein (RBBP8NL) from Homo sapiens (Human).